The sequence spans 227 residues: MFDLSDQLIAMGLWSISIGAFGAAVAGILLANTDLFLTQTEEATLDYLEETELKAIGDEPKSFKAKDLWEKNGAVVMAVRRPGCFLCREEASDLSSLKSQLDQLGVPLYAVVKENIGNEVEQFQPYFNGKIFLDEKGKFYGPQKRKMMFLGLVRLGVWQNFRRAWKGGFEGNLEGEGLILGGMFVIGSGKQGILLEHREKEFGDKANLTAVLDAARKINKQRAQNDN.

The interval 13-111 (LWSISIGAFG…DQLGVPLYAV (99 aa)) is thioredoxin fold. Residues cysteine 84 and cysteine 87 each act as redox-active in the active site.

The protein belongs to the peroxiredoxin-like PRXL2 family. PRXL2A subfamily.

The protein localises to the cytoplasm. Involved in redox regulation of the cell. Acts as an antioxidant. This chain is Peroxiredoxin-like 2A (prxl2a), found in Xenopus tropicalis (Western clawed frog).